The chain runs to 198 residues: Ribonuclease HII (198 aa).

One can recognise an RNase H type-2 domain in the interval Phe3–Pro198. Positions 9, 10, and 104 each coordinate a divalent metal cation.

Belongs to the RNase HII family. The cofactor is Mn(2+). It depends on Mg(2+) as a cofactor.

It is found in the cytoplasm. The catalysed reaction is Endonucleolytic cleavage to 5'-phosphomonoester.. In terms of biological role, endonuclease that specifically degrades the RNA of RNA-DNA hybrids. The polypeptide is Ribonuclease HII (Pyrobaculum neutrophilum (strain DSM 2338 / JCM 9278 / NBRC 100436 / V24Sta) (Thermoproteus neutrophilus)).